An 82-amino-acid polypeptide reads, in one-letter code: Large ribosomal subunit protein bL31B (82 aa).

It belongs to the bacterial ribosomal protein bL31 family. Type B subfamily. Part of the 50S ribosomal subunit.

The protein is Large ribosomal subunit protein bL31B of Pectobacterium atrosepticum (strain SCRI 1043 / ATCC BAA-672) (Erwinia carotovora subsp. atroseptica).